The sequence spans 368 residues: HECT-type ubiquitin ligase-interacting protein apyA (368 aa).

The protein belongs to the arrestin family. Interacts with hulA.

Functionally, may be involved in signaling by recognizing appropriately phosphorylated substrates via its arrestin domains and then recruit a HECT-type ubiquitin ligase such as hulA, leading to ubiquitination of the substrate, providing a link between ubiquitination and phosphorylation in protein regulation and stability. This Emericella nidulans (strain FGSC A4 / ATCC 38163 / CBS 112.46 / NRRL 194 / M139) (Aspergillus nidulans) protein is HECT-type ubiquitin ligase-interacting protein apyA (apyA).